A 313-amino-acid polypeptide reads, in one-letter code: Serine/threonine-protein phosphatase CPPED1 (313 aa).

Serine 2 is modified (phosphoserine). Positions 47-250 (KAWATGDCDN…AVFSGHYHRN (204 aa)) are catalytic. Residues aspartate 53, aspartate 90, asparagine 127, and histidine 246 each contribute to the a divalent metal cation site. Position 293 is a phosphoserine (serine 293).

The protein belongs to the metallophosphoesterase superfamily. CPPED1 family. A divalent metal cation is required as a cofactor.

It localises to the cytoplasm. It catalyses the reaction O-phospho-L-seryl-[protein] + H2O = L-seryl-[protein] + phosphate. It carries out the reaction O-phospho-L-threonyl-[protein] + H2O = L-threonyl-[protein] + phosphate. In terms of biological role, protein phosphatase that dephosphorylates AKT family kinase specifically at 'Ser-473', blocking cell cycle progression and promoting cell apoptosis. May play an inhibitory role in glucose uptake by adipocytes. The chain is Serine/threonine-protein phosphatase CPPED1 (CPPED1) from Bos taurus (Bovine).